A 234-amino-acid polypeptide reads, in one-letter code: uncharacterized protein (234 aa).

68-70 contacts L-glutamine; sequence GES. Residue C101 is the Nucleophile of the active site. L-glutamine contacts are provided by residues R131 and 167-168; that span reads IR. Catalysis depends on charge relay system residues H208 and E210.

The protein belongs to the glutaminase PdxT/SNO family.

Its subcellular location is the cytoplasm. It carries out the reaction L-glutamine + H2O = L-glutamate + NH4(+). This is an uncharacterized protein from Schizosaccharomyces pombe (strain 972 / ATCC 24843) (Fission yeast).